The following is a 415-amino-acid chain: L-cysteine:1D-myo-inositol 2-amino-2-deoxy-alpha-D-glucopyranoside ligase (415 aa).

Cys-43 is a Zn(2+) binding site. L-cysteinyl-5'-AMP contacts are provided by residues 43–46, Thr-58, and 81–83; these read CGIT and NIT. Positions 45–55 match the 'HIGH' region motif; it reads ITPYDATHLGH. The 'ERGGDP' region motif lies at 187-192; that stretch reads ERGGDP. Trp-227 is an L-cysteinyl-5'-AMP binding site. Cys-231 serves as a coordination point for Zn(2+). 249-251 contacts L-cysteinyl-5'-AMP; it reads GSD. Position 256 (His-256) interacts with Zn(2+). Residue Ile-283 participates in L-cysteinyl-5'-AMP binding. Positions 289-293 match the 'KMSKS' region motif; it reads KMSKS.

The protein belongs to the class-I aminoacyl-tRNA synthetase family. MshC subfamily. In terms of assembly, monomer. Zn(2+) serves as cofactor.

The enzyme catalyses 1D-myo-inositol 2-amino-2-deoxy-alpha-D-glucopyranoside + L-cysteine + ATP = 1D-myo-inositol 2-(L-cysteinylamino)-2-deoxy-alpha-D-glucopyranoside + AMP + diphosphate + H(+). Catalyzes the ATP-dependent condensation of GlcN-Ins and L-cysteine to form L-Cys-GlcN-Ins. The protein is L-cysteine:1D-myo-inositol 2-amino-2-deoxy-alpha-D-glucopyranoside ligase of Mycobacterium sp. (strain JLS).